The chain runs to 1422 residues: Cardiac-enriched FHL2-interacting protein (1422 aa).

The tract at residues 1–23 is disordered; it reads MQGNKKCADGFSDTSSIGSVLDE. Phosphothreonine is present on Thr-119. 9 disordered regions span residues 151–177, 199–265, 279–443, 459–500, 516–718, 731–850, 877–1127, 1142–1244, and 1353–1422; these read RTEAQPCDSRPPPSKPPALKNTPKFAH, AGVS…GRGK, SAFE…SSPF, LETS…KAPS, YSPL…SDSQ, FSTS…TNKH, VSSE…HLER, TGAA…GWEP, and RQGS…EGVS. The segment covering 201-210 has biased composition (polar residues); sequence VSSTHQSSHQ. 2 stretches are compositionally biased toward basic and acidic residues: residues 284–298 and 305–315; these read WDAHQPKLRERKDIT and KAPKHYEDMPL. The residue at position 327 (Ser-327) is a Phosphoserine. Positions 342-351 are enriched in polar residues; that stretch reads SPSGIQSTSG. Basic and acidic residues predominate over residues 395–405; it reads GPHDASEDKKQ. The segment covering 461–470 has biased composition (polar residues); sequence TSDTQPVETS. Position 472 is a phosphoserine (Ser-472). Composition is skewed to basic and acidic residues over residues 481 to 495, 524 to 537, and 579 to 588; these read QEKESSEAQSRDSYK, GFDEKTRGKLDGKQ, and PAMDSRESFA. Low complexity predominate over residues 590–606; that stretch reads SHPTFSSPSASSKTHFS. Basic and acidic residues-rich tracts occupy residues 611 to 622, 635 to 644, and 653 to 675; these read AAERNSHEKEEA, WHPDSRENLP, and CNRDSETGQATEKMKPRQLEKRL. The span at 731–744 shows a compositional bias: low complexity; that stretch reads FSTSSSDQSFASFE. Residues 790-801 are compositionally biased toward basic and acidic residues; sequence GVEEHRQKETQR. Ser-815 is modified (phosphoserine). A compositionally biased stretch (basic and acidic residues) spans 828-839; that stretch reads ADKDTALSHAKD. Composition is skewed to polar residues over residues 907 to 926 and 944 to 954; these read SESQEMRNTPLSNSTPSTEQ and QDETSQQTRKG. The span at 975-991 shows a compositional bias: basic and acidic residues; the sequence is ADERLAHEKSRSADSGK. A compositionally biased stretch (polar residues) spans 1048–1067; sequence AATSPNPSSLGGSSTCSPAA. Positions 1087-1099 are enriched in pro residues; the sequence is PPGPGPWASPGPS. A compositionally biased stretch (basic residues) spans 1173-1184; that stretch reads RRAKKLASKRRK. Residues 1185–1202 are compositionally biased toward basic and acidic residues; sequence SDQMSEKHTEAWEGKSFT. Positions 1353-1366 are enriched in polar residues; that stretch reads RQGSSHRPQSSQGA. The span at 1411–1422 shows a compositional bias: acidic residues; the sequence is DDLEDFATEGVS.

In terms of assembly, interacts with FHL2.

The protein localises to the cytoplasm. Its subcellular location is the myofibril. It localises to the sarcomere. It is found in the z line. In terms of biological role, plays an important role in cardiomyocyte hypertrophy via activation of the calcineurin/NFAT signaling pathway. The protein is Cardiac-enriched FHL2-interacting protein of Rattus norvegicus (Rat).